A 483-amino-acid chain; its full sequence is ATP-dependent RNA helicase DDX25 (483 aa).

Residues 61–74 (LAANSLLNKLIHQS) carry the Nuclear export signal motif. The Q motif signature appears at 97 to 125 (KTFEELRLKEELLKGIYAMGFNRPSKIQE). The Nuclear localization signal signature appears at 100-114 (EELRLKEELLKGIYA). Positions 130–300 (MMLAHPPQNL…ERIIPDPNVI (171 aa)) constitute a Helicase ATP-binding domain. 143 to 150 (SQSGTGKT) contacts ATP. The short motif at 247–250 (DEAD) is the DEAD box element. The Helicase C-terminal domain maps to 311–478 (NIRQYYVLCE…QLNAEDMDEI (168 aa)).

This sequence belongs to the DEAD box helicase family. Phosphorylated on threonine residues. The phosphorylated form is found in the cytoplasm but not in the nucleus. As to expression, highly expressed in the Leydig and germ cells of the testis and weakly expressed in the pituitary and hypothalamus.

The protein resides in the cytoplasm. The protein localises to the nucleus. It carries out the reaction ATP + H2O = ADP + phosphate + H(+). ATP-dependent RNA helicase. Required for mRNA export and translation regulation during spermatid development. The sequence is that of ATP-dependent RNA helicase DDX25 (DDX25) from Homo sapiens (Human).